Reading from the N-terminus, the 153-residue chain is Ribonuclease H (153 aa).

An RNase H type-1 domain is found at 1–141 (MKHVHIFTDG…ADELARKGME (141 aa)). The Mg(2+) site is built by D9, E47, D69, and D133. Positions 123–153 (HAGHPENERADELARKGMEPFKKARRADAVK) are disordered. Positions 125 to 153 (GHPENERADELARKGMEPFKKARRADAVK) are enriched in basic and acidic residues.

Belongs to the RNase H family. Monomer. Mg(2+) serves as cofactor.

The protein localises to the cytoplasm. It carries out the reaction Endonucleolytic cleavage to 5'-phosphomonoester.. Functionally, endonuclease that specifically degrades the RNA of RNA-DNA hybrids. This is Ribonuclease H from Rhizobium meliloti (strain 1021) (Ensifer meliloti).